We begin with the raw amino-acid sequence, 216 residues long: Ribosomal RNA large subunit methyltransferase E (216 aa).

The S-adenosyl-L-methionine site is built by Gly-67, Trp-69, Asp-87, Asp-103, and Asp-128. The Proton acceptor role is filled by Lys-168.

It belongs to the class I-like SAM-binding methyltransferase superfamily. RNA methyltransferase RlmE family.

The protein localises to the cytoplasm. The enzyme catalyses uridine(2552) in 23S rRNA + S-adenosyl-L-methionine = 2'-O-methyluridine(2552) in 23S rRNA + S-adenosyl-L-homocysteine + H(+). Specifically methylates the uridine in position 2552 of 23S rRNA at the 2'-O position of the ribose in the fully assembled 50S ribosomal subunit. The protein is Ribosomal RNA large subunit methyltransferase E of Acinetobacter baumannii (strain AB307-0294).